Consider the following 157-residue polypeptide: 2-C-methyl-D-erythritol 2,4-cyclodiphosphate synthase (157 aa).

The a divalent metal cation site is built by aspartate 8 and histidine 10. Residues 8-10 (DVH) and 34-35 (HS) each bind 4-CDP-2-C-methyl-D-erythritol 2-phosphate. Histidine 42 is a binding site for a divalent metal cation. 4-CDP-2-C-methyl-D-erythritol 2-phosphate-binding positions include 56-58 (DIG), 61-65 (FPDTD), 100-106 (AQAPKMA), 132-135 (TTTE), phenylalanine 139, and arginine 142.

This sequence belongs to the IspF family. Homotrimer. Requires a divalent metal cation as cofactor.

It catalyses the reaction 4-CDP-2-C-methyl-D-erythritol 2-phosphate = 2-C-methyl-D-erythritol 2,4-cyclic diphosphate + CMP. It functions in the pathway isoprenoid biosynthesis; isopentenyl diphosphate biosynthesis via DXP pathway; isopentenyl diphosphate from 1-deoxy-D-xylulose 5-phosphate: step 4/6. In terms of biological role, involved in the biosynthesis of isopentenyl diphosphate (IPP) and dimethylallyl diphosphate (DMAPP), two major building blocks of isoprenoid compounds. Catalyzes the conversion of 4-diphosphocytidyl-2-C-methyl-D-erythritol 2-phosphate (CDP-ME2P) to 2-C-methyl-D-erythritol 2,4-cyclodiphosphate (ME-CPP) with a corresponding release of cytidine 5-monophosphate (CMP). The protein is 2-C-methyl-D-erythritol 2,4-cyclodiphosphate synthase of Pseudomonas fluorescens (strain SBW25).